A 255-amino-acid polypeptide reads, in one-letter code: Putative SET domain-containing protein L678 (255 aa).

Residues 5-176 form the SET domain; the sequence is NRISEVFIKK…TGEELTDNYV (172 aa). A disordered region spans residues 235-255; sequence LQQNSKNLKKNPKKTIKATPK.

This sequence belongs to the class V-like SAM-binding methyltransferase superfamily.

In Acanthamoeba polyphaga mimivirus (APMV), this protein is Putative SET domain-containing protein L678.